We begin with the raw amino-acid sequence, 301 residues long: MAALPSLRQLSYLVTLSETLHFTEAARRSFVTQSTLSGGIMELERLLGGVLVERDRQNVRLTPLGEQVVARARVLLADAQDLMRLSREMSEPLTGDLHLGIIPTIAPFILTQLLDEVHKQLPKIQLHLHEAQSEKIVERLEHGNLDMVVLALPFDTRGLKVADIAKENLYLVCNKHDKHSVNAHSLDDLDLSRLMLLEEGHCLRDHALSACPIGERKNDNRLKASSLPTLVEMVSSNLGFTLLPEIAINTHMLKFNDDLLVKEIENAPSRTLALITRKSTPLQSEFDVILDILKRITATLH.

An HTH lysR-type domain is found at 5–62 (PSLRQLSYLVTLSETLHFTEAARRSFVTQSTLSGGIMELERLLGGVLVERDRQNVRLT). Residues 22-41 (FTEAARRSFVTQSTLSGGIM) constitute a DNA-binding region (H-T-H motif).

Belongs to the LysR transcriptional regulatory family.

Functionally, transcriptional regulator of the esterase operon. The protein is HTH-type transcriptional regulator EstR (estR) of Acinetobacter baylyi (strain ATCC 33305 / BD413 / ADP1).